The following is a 160-amino-acid chain: MADNARAKRLADLIREVVAQKLQRGIKDPRLGSHVTITDTRVTGDLREATVFYTVYGDDEERKAATAGLESAKGILRSEVGKAAGVKFTPTLTFVMDALPDTARNIEDLLDKARQSDEKVREASAGATYAGEADPYRKPDEDETDTEGAVEADETDDTAK.

Residues 112–122 are compositionally biased toward basic and acidic residues; it reads KARQSDEKVRE. The disordered stretch occupies residues 112–160; that stretch reads KARQSDEKVREASAGATYAGEADPYRKPDEDETDTEGAVEADETDDTAK. Residues 141-160 are compositionally biased toward acidic residues; that stretch reads EDETDTEGAVEADETDDTAK.

This sequence belongs to the RbfA family. As to quaternary structure, monomer. Binds 30S ribosomal subunits, but not 50S ribosomal subunits or 70S ribosomes.

The protein localises to the cytoplasm. In terms of biological role, one of several proteins that assist in the late maturation steps of the functional core of the 30S ribosomal subunit. Associates with free 30S ribosomal subunits (but not with 30S subunits that are part of 70S ribosomes or polysomes). Required for efficient processing of 16S rRNA. May interact with the 5'-terminal helix region of 16S rRNA. The chain is Ribosome-binding factor A from Streptomyces coelicolor (strain ATCC BAA-471 / A3(2) / M145).